The sequence spans 257 residues: Histidine/lysine/arginine/ornithine transport ATP-binding protein HisP (257 aa).

The region spanning 6–252 (LNVIDLHKRY…PQSPRLQRFL (247 aa)) is the ABC transporter domain. ATP is bound by residues Ser-40, Gly-41, Gly-43, Lys-44, Ser-45, and Thr-46.

This sequence belongs to the ABC transporter superfamily. The HisPMQJ complex is composed of two ATP-binding proteins (HisP), two transmembrane proteins (HisM and HisQ) and a solute-binding protein (HisJ). The HisPMQ-ArgT complex is composed of two ATP-binding proteins (HisP), two transmembrane proteins (HisM and HisQ) and a solute-binding protein (ArgT).

It localises to the cell inner membrane. The enzyme catalyses a polar amino acid(out) + ATP + H2O = a polar amino acid(in) + ADP + phosphate + H(+). It catalyses the reaction L-histidine(out) + ATP + H2O = L-histidine(in) + ADP + phosphate + H(+). The catalysed reaction is L-lysine(out) + ATP + H2O = L-lysine(in) + ADP + phosphate + H(+). It carries out the reaction L-arginine(out) + ATP + H2O = L-arginine(in) + ADP + phosphate + H(+). The enzyme catalyses L-ornithine(out) + ATP + H2O = L-ornithine(in) + ADP + phosphate + H(+). In terms of biological role, part of the ABC transporter complex HisPMQJ involved in histidine transport. Is also part of the ABC transporter complex HisPMQ-ArgT involved in lysine/arginine/ornithine transport. Shows ATPase activity. Responsible for energy coupling to the transport system. The polypeptide is Histidine/lysine/arginine/ornithine transport ATP-binding protein HisP (Escherichia coli (strain K12)).